The chain runs to 595 residues: DNA mismatch repair protein MutL (595 aa).

The protein belongs to the DNA mismatch repair MutL/HexB family.

Its function is as follows. This protein is involved in the repair of mismatches in DNA. It is required for dam-dependent methyl-directed DNA mismatch repair. May act as a 'molecular matchmaker', a protein that promotes the formation of a stable complex between two or more DNA-binding proteins in an ATP-dependent manner without itself being part of a final effector complex. This Rhodopseudomonas palustris (strain ATCC BAA-98 / CGA009) protein is DNA mismatch repair protein MutL.